A 169-amino-acid polypeptide reads, in one-letter code: Protein ORFb in retron Ec67 (169 aa).

This Escherichia coli protein is Protein ORFb in retron Ec67.